We begin with the raw amino-acid sequence, 348 residues long: Histidinol-phosphate aminotransferase (348 aa).

Lys210 carries the N6-(pyridoxal phosphate)lysine modification.

This sequence belongs to the class-II pyridoxal-phosphate-dependent aminotransferase family. Histidinol-phosphate aminotransferase subfamily. As to quaternary structure, homodimer. Requires pyridoxal 5'-phosphate as cofactor.

The enzyme catalyses L-histidinol phosphate + 2-oxoglutarate = 3-(imidazol-4-yl)-2-oxopropyl phosphate + L-glutamate. The protein operates within amino-acid biosynthesis; L-histidine biosynthesis; L-histidine from 5-phospho-alpha-D-ribose 1-diphosphate: step 7/9. The sequence is that of Histidinol-phosphate aminotransferase from Cytophaga hutchinsonii (strain ATCC 33406 / DSM 1761 / CIP 103989 / NBRC 15051 / NCIMB 9469 / D465).